A 95-amino-acid polypeptide reads, in one-letter code: Co-chaperonin GroES (95 aa).

This sequence belongs to the GroES chaperonin family. In terms of assembly, heptamer of 7 subunits arranged in a ring. Interacts with the chaperonin GroEL.

Its subcellular location is the cytoplasm. Together with the chaperonin GroEL, plays an essential role in assisting protein folding. The GroEL-GroES system forms a nano-cage that allows encapsulation of the non-native substrate proteins and provides a physical environment optimized to promote and accelerate protein folding. GroES binds to the apical surface of the GroEL ring, thereby capping the opening of the GroEL channel. The polypeptide is Co-chaperonin GroES (Alkalilimnicola ehrlichii (strain ATCC BAA-1101 / DSM 17681 / MLHE-1)).